The chain runs to 103 residues: Matrix Gla protein (103 aa).

The first 19 residues, 1-19, serve as a signal peptide directing secretion; that stretch reads MKSLLLLSILAALAVAALC. Glu21 is subject to 4-carboxyglutamate; partial. Phosphoserine occurs at positions 22, 25, and 28. A Gla domain is found at 51–97; it reads RAKAQERIRELNKPQYELNREACDDFKLCERYAMVYGYNAAYDRYFR. 4-carboxyglutamate is present on residues Glu56, Glu60, Glu67, and Glu71. Cys73 and Cys79 are disulfide-bonded. The propeptide at 99–102 is removed in short form; probably by carboxypeptidase N; the sequence is RRGA. Residue Lys103 is a propeptide, removed in long form; probably by carboxypeptidase H.

It belongs to the osteocalcin/matrix Gla protein family. Requires vitamin K-dependent gamma-carboxylation for its function.

It is found in the secreted. Functionally, associates with the organic matrix of bone and cartilage. Thought to act as an inhibitor of bone formation. The sequence is that of Matrix Gla protein (MGP) from Bos taurus (Bovine).